The chain runs to 200 residues: Charged multivesicular body protein 6 (200 aa).

Gly2 carries the N-myristoyl glycine lipid modification. Positions 10 to 94 (RSRVTEQDKA…ERMVQDIEFT (85 aa)) form a coiled coil. The Type-2 MIT-interacting motif motif lies at 168 to 179 (LELPDVPSEPLP). The interval 169–200 (ELPDVPSEPLPEEPPEATPVKNRPKPELVAAS) is disordered.

It belongs to the SNF7 family. In terms of assembly, probable core component of the endosomal sorting required for transport complex III (ESCRT-III). ESCRT-III components are thought to multimerize to form a flat lattice on the perimeter membrane of the endosome.

Its subcellular location is the endomembrane system. It localises to the late endosome membrane. Functionally, probable core component of the endosomal sorting required for transport complex III (ESCRT-III) which is involved in multivesicular bodies (MVBs) formation and sorting of endosomal cargo proteins into MVBs. MVBs contain intraluminal vesicles (ILVs) that are generated by invagination and scission from the limiting membrane of the endosome and mostly are delivered to lysosomes enabling degradation of membrane proteins, such as stimulated growth factor receptors, lysosomal enzymes and lipids. In the ESCRT-III complex, it probably serves as an acceptor for the ESCRT-II complex on endosomal membranes. This Gallus gallus (Chicken) protein is Charged multivesicular body protein 6 (CHMP6).